The chain runs to 1178 residues: Dual specificity mitogen-activated protein kinase kinase hemipterous (1178 aa).

Disordered stretches follow at residues 74–103 and 115–148; these read SGSGISIAQRPAPPVPHATPFGSASASSSS and ATGTFGGTYTPPTTRVSRATPTLPMLSSGPGGGL. 2 stretches are compositionally biased toward low complexity: residues 91–103 and 115–128; these read ATPFGSASASSSS and ATGTFGGTYTPPTT. Residues 197–456 enclose the Protein kinase domain; the sequence is LKHLGDLGNG…YPELLAQPFI (260 aa). ATP contacts are provided by residues 203-211 and Lys-226; that span reads LGNGTSGNV. Asp-320 acts as the Proton acceptor in catalysis. Ser-348 bears the Phosphoserine mark. A Phosphothreonine modification is found at Thr-352. A disordered region spans residues 522 to 648; it reads TYAGQSPTNP…DESPKKESMF (127 aa). The segment covering 523–543 has biased composition (polar residues); it reads YAGQSPTNPQKTIKPTQIPSY. Residues 544–570 show a composition bias toward low complexity; sequence QQQQSQFFMQSATQLPQTTTTTPTATT. Over residues 574-593 the composition is skewed to gly residues; the sequence is GGSGNGNGRGNGSGGSGNGS. The segment covering 594–608 has biased composition (low complexity); it reads GSSSSASPLSPPSAG. Basic and acidic residues predominate over residues 636–646; that stretch reads KYNDESPKKES. 2 positions are modified to phosphoserine: Ser-646 and Ser-662. 6 disordered regions span residues 715–783, 797–851, 912–933, 999–1026, 1042–1108, and 1122–1178; these read TTTP…LQPG, QNQL…STCS, GTSPTLQSRSPEQQSDYGGNGN, TSPVASSMDRDQEPVHPQPPAYRSVVNN, SSSS…NRGQ, and GQPP…TIDQ. A compositionally biased stretch (polar residues) spans 724 to 734; the sequence is TENSQAYDSCD. Composition is skewed to low complexity over residues 735-783, 808-817, and 837-851; these read SSSN…LQPG, RYQQQRQQPP, and THSTSSQSSTQSTCS. The span at 912-928 shows a compositional bias: polar residues; that stretch reads GTSPTLQSRSPEQQSDY. Residues 1042-1055 are compositionally biased toward low complexity; the sequence is SSSSNTSQSTSPTT. 2 positions are modified to phosphoserine: Ser-1150 and Ser-1154. Residues 1168–1178 are compositionally biased toward basic and acidic residues; the sequence is PQRRIYRTIDQ.

It belongs to the protein kinase superfamily. STE Ser/Thr protein kinase family. MAP kinase kinase subfamily. Post-translationally, MAPKK is itself dependent on Ser/Thr phosphorylation for activity catalyzed by MAP kinase kinase kinases. In terms of processing, weakly autophosphorylated.

It catalyses the reaction L-seryl-[protein] + ATP = O-phospho-L-seryl-[protein] + ADP + H(+). The catalysed reaction is L-threonyl-[protein] + ATP = O-phospho-L-threonyl-[protein] + ADP + H(+). It carries out the reaction L-tyrosyl-[protein] + ATP = O-phospho-L-tyrosyl-[protein] + ADP + H(+). Its function is as follows. Required for the epithelial cell sheet movement called dorsal closure (DC), which allows establishment of the dorsal epidermis. Controls the expression in the dorsal epithelium edges of another dorsal closure gene, puckered (puc). Phosphorylates and activates the MAP kinase bsk; bsk signal transduction pathway mediates an immune response and morphogenesis. The protein is Dual specificity mitogen-activated protein kinase kinase hemipterous (hep) of Drosophila melanogaster (Fruit fly).